Consider the following 228-residue polypeptide: Aquaporin Z (228 aa).

Transmembrane regions (helical) follow at residues 1–21 (MLNKLSAEFFGTFWLVFGGCG) and 23–43 (AILAAAFPELGIGFLGVALAF). The short motif at 63-65 (NPA) is the NPA 1 element. 3 helical membrane-spanning segments follow: residues 82 to 102 (IPYWVAQVLGAIAAAAILYVI), 129 to 149 (MMAGLLIEIILTAFFIIIILG), and 154 to 174 (LAPAGFAPIAIGFGLTLIHLV). An NPA 2 motif is present at residues 184 to 186 (NPA). Residues 205–225 (LFWVAPLVGAVIGAIIWKGLL) form a helical membrane-spanning segment.

Belongs to the MIP/aquaporin (TC 1.A.8) family. Homotetramer.

Its subcellular location is the cell inner membrane. It carries out the reaction H2O(in) = H2O(out). Its function is as follows. Channel that permits osmotically driven movement of water in both directions. It is involved in the osmoregulation and in the maintenance of cell turgor during volume expansion in rapidly growing cells. It mediates rapid entry or exit of water in response to abrupt changes in osmolarity. This Brucella melitensis biotype 1 (strain ATCC 23456 / CCUG 17765 / NCTC 10094 / 16M) protein is Aquaporin Z.